Here is a 520-residue protein sequence, read N- to C-terminus: Probable E3 ubiquitin-protein ligase XBOS33 (520 aa).

ANK repeat units follow at residues 44 to 73, 77 to 106, 111 to 140, 185 to 214, and 228 to 258; these read GLNSPLHFAAAKGHLDIVTLLLEKGADVNV, CGQTALMHACRHGHWEVVQMLLLFRCNVTR, SGRTALHFAAHDGLVRCVRLLLADFVPSAP, GGVTALHMAALNGHFDCMQLLIDLGANVSA, and AGSTPLHYAAGGGNAECCQLLLSKGASKLTL. Residues 327–377 form an RING-type zinc finger; sequence CAVCLERSCSVAAEGCCHEFCIKCALYLCSTSNTRVEFTGPPGSIPCPLCR. Polar residues predominate over residues 467–479; it reads QDGSEVQSPQPSH. Residues 467–493 form a disordered region; it reads QDGSEVQSPQPSHCASMEMDKREQQDL. The span at 484–493 shows a compositional bias: basic and acidic residues; it reads EMDKREQQDL.

The enzyme catalyses S-ubiquitinyl-[E2 ubiquitin-conjugating enzyme]-L-cysteine + [acceptor protein]-L-lysine = [E2 ubiquitin-conjugating enzyme]-L-cysteine + N(6)-ubiquitinyl-[acceptor protein]-L-lysine.. The protein operates within protein modification; protein ubiquitination. The chain is Probable E3 ubiquitin-protein ligase XBOS33 (XBOS33) from Oryza sativa subsp. japonica (Rice).